The following is a 248-amino-acid chain: Large ribosomal subunit protein uL30A (248 aa).

The tract at residues 1-44 (MSQKKQKIQVEQKVPENVAKKTQRDSKLRDAVAKRRTERLAANK) is disordered. A compositionally biased stretch (basic and acidic residues) spans 8–41 (IQVEQKVPENVAKKTQRDSKLRDAVAKRRTERLA).

The protein belongs to the universal ribosomal protein uL30 family.

Functionally, binds to G-rich structures in 28S rRNA and in mRNAs. Plays a regulatory role in the translation apparatus; inhibits cell-free translation of mRNAs. This chain is Large ribosomal subunit protein uL30A (Rpl7-1), found in Paramecium tetraurelia.